The chain runs to 246 residues: 1-(5-phosphoribosyl)-5-[(5-phosphoribosylamino)methylideneamino] imidazole-4-carboxamide isomerase (246 aa).

Asp-8 serves as the catalytic Proton acceptor. Asp-129 acts as the Proton donor in catalysis.

This sequence belongs to the HisA/HisF family.

The protein localises to the cytoplasm. The catalysed reaction is 1-(5-phospho-beta-D-ribosyl)-5-[(5-phospho-beta-D-ribosylamino)methylideneamino]imidazole-4-carboxamide = 5-[(5-phospho-1-deoxy-D-ribulos-1-ylimino)methylamino]-1-(5-phospho-beta-D-ribosyl)imidazole-4-carboxamide. Its pathway is amino-acid biosynthesis; L-histidine biosynthesis; L-histidine from 5-phospho-alpha-D-ribose 1-diphosphate: step 4/9. This Nitrobacter hamburgensis (strain DSM 10229 / NCIMB 13809 / X14) protein is 1-(5-phosphoribosyl)-5-[(5-phosphoribosylamino)methylideneamino] imidazole-4-carboxamide isomerase.